A 108-amino-acid polypeptide reads, in one-letter code: FK506-binding protein 1A (108 aa).

The disordered stretch occupies residues methionine 1–glycine 20. Positions glycine 20–asparagine 108 constitute a PPIase FKBP-type domain.

It belongs to the FKBP-type PPIase family. FKBP1 subfamily.

It is found in the cytoplasm. It carries out the reaction [protein]-peptidylproline (omega=180) = [protein]-peptidylproline (omega=0). Inhibited by both FK506 and rapamycin. Functionally, PPIases accelerate the folding of proteins. It catalyzes the cis-trans isomerization of proline imidic peptide bonds in oligopeptides. The chain is FK506-binding protein 1A (fprA) from Emericella nidulans (strain FGSC A4 / ATCC 38163 / CBS 112.46 / NRRL 194 / M139) (Aspergillus nidulans).